A 281-amino-acid polypeptide reads, in one-letter code: Gas vesicle protein L1 (281 aa).

This sequence belongs to the gas vesicle GvpF/GvpL family. In terms of assembly, may form oligomers. GvpF to GvpM interact with each other in vitro, and may form multi-subunit complex(es). Interacts with GvpC1, GvpN1 and GvpO1.

The protein resides in the gas vesicle. Its subcellular location is the cytoplasm. In terms of biological role, proteins GvpF to GvpM might be involved in nucleating gas vesicle formation. A minor component of the gas vesicle. This the only minor gas vesicle protein that binds all the others (including GvpC1, GvpN1 and GvpO1, but not GvpA1), suggesting it might be able to assemble them. Gas vesicles are hollow, gas filled proteinaceous nanostructures found in several microbial planktonic microorganisms. They allow positioning of halobacteria at the optimal depth for growth in the poorly aerated, shallow brine pools of their habitat. Expression of a 9.5 kb p-vac DNA fragment containing 2 divergently transcribed regions (gvpD-gvpE-gvpF-gvpG-gvpH-gvpI-gvpJ-gvpK-gvpL-gvpM and gvpA-gvpC-gvpN-gvpO) allows H.volcanii to produce gas vesicles. A minimal gas vesicle can be made in H.volcanii by gvpA1-gvpO1 plus gvpF1-gvpG1-gvpJ1-gvpK1-gvpL1-gvpM1; lack of enough GvpJ1 prevents their formation. A similar region restores gas vesicle production in H.halobium without the p-vac locus, but it still has the c-vac locus. In Halobacterium salinarum (strain ATCC 700922 / JCM 11081 / NRC-1) (Halobacterium halobium), this protein is Gas vesicle protein L1 (gvpL11).